Consider the following 790-residue polypeptide: LPS-assembly protein LptD (790 aa).

The N-terminal stretch at 1–20 (MRMLRWLILSAFSVAGAVQA) is a signal peptide.

Belongs to the LptD family. Component of the lipopolysaccharide transport and assembly complex. Interacts with LptE and LptA.

The protein resides in the cell outer membrane. Its function is as follows. Together with LptE, is involved in the assembly of lipopolysaccharide (LPS) at the surface of the outer membrane. In Bordetella pertussis (strain Tohama I / ATCC BAA-589 / NCTC 13251), this protein is LPS-assembly protein LptD.